The primary structure comprises 297 residues: Oxidoreductase aprR (297 aa).

Belongs to the NmrA-type oxidoreductase family. Isoflavone reductase subfamily.

The protein operates within secondary metabolite biosynthesis. In terms of biological role, oxidoreductase; part of the gene cluster that mediates the biosynthesis of the asperipin-2a, a bicyclic peptide that possesses two macrocyclic ether rings consisting of 14- and 17-membered paracyclophans. The pathway starts with the processing of the precursor aprA by kexin proteases to produce 11 identical copies of the hexapeptide Phe-Tyr-Tyr-Thr-Gly-Tyr. Macrocyclization of asperipin-2a may accompany an alpha-hydroxylation-dehydration sequence to give an imine, which is readily hydrolyzed to yield putative ketone intermediate. The reductase aprR may be required for the final reduction to yield asperipin-2a. The polypeptide is Oxidoreductase aprR (Aspergillus flavus (strain ATCC 200026 / FGSC A1120 / IAM 13836 / NRRL 3357 / JCM 12722 / SRRC 167)).